We begin with the raw amino-acid sequence, 435 residues long: Acetyltransferase atnC (435 aa).

A run of 3 helical transmembrane segments spans residues 10 to 30, 40 to 60, and 68 to 88; these read AFAN…FLII, YFGI…APTL, and SFLA…LLIL. Asn-203 carries an N-linked (GlcNAc...) asparagine glycan. A run of 3 helical transmembrane segments spans residues 306-326, 333-353, and 370-390; these read FLVF…MGLS, IPYF…QAFY, and VVGF…YMFP. Asn-406 carries N-linked (GlcNAc...) asparagine glycosylation. Residues 407–427 form a helical membrane-spanning segment; the sequence is LTEVIGMPMMWGLLGTFGMLV.

Belongs to the wax synthase family.

It is found in the membrane. It functions in the pathway secondary metabolite biosynthesis; terpenoid biosynthesis. Its function is as follows. Acetyltransferase; part of the gene cluster that mediates the biosynthesis of the meroterpenoids arthripenoids. The pathway begins with the HR-PKS atnH that catalyzes two chain-extension steps to form a reduced triketide, which then primes the SAT domain in the NR-PKS atnG to initiate three more cycles of extension to give a linear hexaketide corresponding to the polyketide part of arthripenoids. The FAD-dependent monooxygenase atnJ then performs an oxidative decarboxylation at C11 of the atnH/atnG product, via an electrophilic aromatic hydroxylation with concomitant ipso-decarboxylation. The membrane-bound polyprenyl transferase atnF then introduces a farnesyl group before the FAD-dependent monooxygenase atnK functions as the first epoxidase on terminal C12'-C13' olefin, followed by a second epoxidation on C7'-C8' catalyzed by atnA. The terpene cyclase/mutase atnI then initiates the sequential tricyclic ring formation through protonation of the terminal epoxide and catalyzes the regioselective and stereoselective 6/6/6-tricyclic ring formation. The cytochrome P450 monooxygenase atnM is responsible for hydroxylating both C1' and C10'. The next steps may involve ketoreduction and acetyl transfer by the ketoreductase atnB and the acetyltransferase atnC, and lead to the production of arthripenoid B, the final biosynthetic product of the atn cluster. The hydroquinone moiety in arthripenoid B is prone to undergo spontaneous oxidation to afford a benzoquinone compound, a key intermediate for generating structure diversity. For instance, addition of a cysteine followed by ring contraction gives arthripenoid A, tautomerization gives the main product arthripenoid C, addition of a molecular of water or amine affords arthripenoid D or E, respectively, and loss of one water forms arthripenoid F. This chain is Acetyltransferase atnC, found in Arthrinium sp.